The primary structure comprises 206 residues: MLMKGTTTVGVKFKNGVIVASDKRATSGTFVASKSAVKTLKITDYAVATISGLVADGQYLVNNVRTIADLYSLDTERPLSVRGIARILAFLLRRYRPYFLLAQLIVGGVDREGAHLFNVDPFGTLTEEDYLATGSGSPVAISVIESGYSPDMDRESALRLVISSMTAALSRDAATGDGIDVVVIDDRGVNFLSREEISDLVREVLR.

The propeptide at 1-5 (MLMKG) is removed in mature form; by autocatalysis. The Nucleophile role is filled by Thr6.

It belongs to the peptidase T1B family. In terms of assembly, the 20S proteasome core is composed of 14 alpha and 14 beta subunits that assemble into four stacked heptameric rings, resulting in a barrel-shaped structure. The two inner rings, each composed of seven catalytic beta subunits, are sandwiched by two outer rings, each composed of seven alpha subunits. The catalytic chamber with the active sites is on the inside of the barrel. Has a gated structure, the ends of the cylinder being occluded by the N-termini of the alpha-subunits. Is capped at one or both ends by the proteasome regulatory ATPase, PAN.

It localises to the cytoplasm. It carries out the reaction Cleavage of peptide bonds with very broad specificity.. Its activity is regulated as follows. The formation of the proteasomal ATPase PAN-20S proteasome complex, via the docking of the C-termini of PAN into the intersubunit pockets in the alpha-rings, triggers opening of the gate for substrate entry. Interconversion between the open-gate and close-gate conformations leads to a dynamic regulation of the 20S proteasome proteolysis activity. Component of the proteasome core, a large protease complex with broad specificity involved in protein degradation. This is Proteasome subunit beta 1 from Korarchaeum cryptofilum (strain OPF8).